We begin with the raw amino-acid sequence, 279 residues long: MAVVTMRQLLESGVHFGHQTRRWNPKMKRFIFTERNGIYIIDLRQTLDYIEKAYDFVRGTVAEGGSILFVGTKKQAQEAIAEQATRVGQPYVNHRWLGGMLTNFQTVYKRLQRMKELEALGDLSGTAAGYTKKETLQLSREKEKLSRTLGGLRDMQKLPAAIWVVDTKKEHIAVDEARKLGIPVIAVLDTNCDPDEVDYPIPGNDDAIRSAELLTKVVAAAVADGLIARSGRRRGTDEKPEAGVASDEPLAEWERELLEEPKKSDEPKSDEQPAAAAAE.

The segment at 232 to 279 (RRRGTDEKPEAGVASDEPLAEWERELLEEPKKSDEPKSDEQPAAAAAE) is disordered. Over residues 252–271 (EWERELLEEPKKSDEPKSDE) the composition is skewed to basic and acidic residues.

Belongs to the universal ribosomal protein uS2 family.

The chain is Small ribosomal subunit protein uS2 from Salinispora arenicola (strain CNS-205).